We begin with the raw amino-acid sequence, 323 residues long: Beta-ketoacyl-[acyl-carrier-protein] synthase III (323 aa).

Residues C112 and H250 contribute to the active site. The segment at 251–255 (QANYR) is ACP-binding. The active site involves N280.

This sequence belongs to the thiolase-like superfamily. FabH family. Homodimer.

It localises to the cytoplasm. It carries out the reaction malonyl-[ACP] + acetyl-CoA + H(+) = 3-oxobutanoyl-[ACP] + CO2 + CoA. The protein operates within lipid metabolism; fatty acid biosynthesis. Catalyzes the condensation reaction of fatty acid synthesis by the addition to an acyl acceptor of two carbons from malonyl-ACP. Catalyzes the first condensation reaction which initiates fatty acid synthesis and may therefore play a role in governing the total rate of fatty acid production. Possesses both acetoacetyl-ACP synthase and acetyl transacylase activities. Its substrate specificity determines the biosynthesis of branched-chain and/or straight-chain of fatty acids. In Clostridium beijerinckii (strain ATCC 51743 / NCIMB 8052) (Clostridium acetobutylicum), this protein is Beta-ketoacyl-[acyl-carrier-protein] synthase III.